The following is a 2409-amino-acid chain: Reducing polyketide synthase FUB1 (2409 aa).

Over residues 1–43 (MTLSNGSNGANGTSNGHGAHPSANGFHNAANGGANNGTPNGGA) the composition is skewed to low complexity. The interval 1 to 49 (MTLSNGSNGANGTSNGHGAHPSANGFHNAANGGANNGTPNGGAEYNASL) is disordered. In terms of domain architecture, Ketosynthase family 3 (KS3) spans 57-479 (SSAIAVIGVS…GANAHAVLDD (423 aa)). Active-site for beta-ketoacyl synthase activity residues include Cys230, His365, and His403. Positions 608-929 (TFIFTGQGAQ…FSAIKRKQDA (322 aa)) are malonyl-CoA:ACP transacylase (MAT) domain. Ser699 (for malonyltransferase activity) is an active-site residue. The segment at 994–1127 (LELLGVRDPR…GLVSTSYKRE (134 aa)) is N-terminal hotdog fold. Residues 994–1307 (LELLGVRDPR…TVPLRGASDP (314 aa)) enclose the PKS/mFAS DH domain. The tract at residues 995–1302 (ELLGVRDPRS…LEGCKTVPLR (308 aa)) is dehydratase (DH) domain. His1026 serves as the catalytic Proton acceptor; for dehydratase activity. The interval 1155-1307 (LPSVDPTVFY…TVPLRGASDP (153 aa)) is C-terminal hotdog fold. The active-site Proton donor; for dehydratase activity is Asp1220. An enoyl reductase (ER) domain region spans residues 1713 to 2025 (GLLDTLEYLS…SGGHVGKIVL (313 aa)). The segment at 2049-2225 (ATYVLIGGLG…AATSINLSLV (177 aa)) is ketoreductase (KR) domain. The Carrier domain occupies 2328–2405 (EVYEIVLQQL…GFAKKVMAKS (78 aa)). An O-(pantetheine 4'-phosphoryl)serine modification is found at Ser2365.

It participates in mycotoxin biosynthesis. Its function is as follows. Reducing polyketide synthase; part of the gene cluster that mediates the biosynthesis of fusaric acid, a mycotoxin with low to moderate toxicity to animals and humans, but with high phytotoxic properties. L-aspartate is suggested as fusaric acid amino acid precursor that is activated and further processed to O-acetyl-L-homoserine by cluster enzymes aspartate kinase FUB3 and homoserine O-acetyltransferase FUB5, as well as enzymes of the primary metabolism. The polyketide synthase (PKS) FUB1 generates the triketide trans-2-hexenal which is presumptively released by the hydrolase FUB4 and linked to the NRPS-bound amino acid precursor by NAD(P)-dependent dehydrogenase FUB6. FUB1, FUB4, and the non-canonical NRPS Fub8 may form an enzyme complex. Further processing of the NRPS-bound intermediate might be carried out by FUB6 and the sulfhydrylase FUB7, enabling a spontaneous electrocyclization to close the carbon backbone of fusaric acid. Dihydrofusaric acid is likely to be released via reduction by the thioester reductase (TR) domain of FUB8 whereupon the final oxidation to fusaric acid may (also) be performed by the FMN-dependent dehydrogenase FUB9. This is Reducing polyketide synthase FUB1 from Gibberella moniliformis (strain M3125 / FGSC 7600) (Maize ear and stalk rot fungus).